A 239-amino-acid chain; its full sequence is Ureidoacrylate amidohydrolase RutB (239 aa).

Asp35 (proton acceptor) is an active-site residue. Residue Lys144 is part of the active site. The active-site Nucleophile is Cys177.

It belongs to the isochorismatase family. RutB subfamily.

The enzyme catalyses (Z)-3-ureidoacrylate + H2O + H(+) = (Z)-3-aminoacrylate + NH4(+) + CO2. The catalysed reaction is (Z)-3-ureidoacrylate + H2O = (Z)-3-aminoacrylate + carbamate + H(+). It catalyses the reaction (Z)-2-methylureidoacrylate + H2O + H(+) = (Z)-2-methylaminoacrylate + NH4(+) + CO2. Hydrolyzes ureidoacrylate to form aminoacrylate and carbamate. The carbamate hydrolyzes spontaneously, thereby releasing one of the nitrogen atoms of the pyrimidine ring as ammonia and one of its carbon atoms as CO2. This is Ureidoacrylate amidohydrolase RutB from Caulobacter segnis (strain ATCC 21756 / DSM 7131 / JCM 7823 / NBRC 15250 / LMG 17158 / TK0059) (Mycoplana segnis).